A 379-amino-acid chain; its full sequence is Homoserine O-acetyltransferase (379 aa).

Residues 1-24 form a disordered region; that stretch reads MSHDTTPPLPATGAWREGDPPGDR. In terms of domain architecture, AB hydrolase-1 spans 60–365; sequence NAVLVLHALT…ASGHDGFLTE (306 aa). Residue Ser-165 is the Nucleophile of the active site. Arg-236 lines the substrate pocket. Residues Asp-329 and His-359 contribute to the active site. Position 360 (Asp-360) interacts with substrate.

This sequence belongs to the AB hydrolase superfamily. MetX family. In terms of assembly, homodimer.

The protein localises to the cytoplasm. The catalysed reaction is L-homoserine + acetyl-CoA = O-acetyl-L-homoserine + CoA. Its pathway is amino-acid biosynthesis; L-methionine biosynthesis via de novo pathway; O-acetyl-L-homoserine from L-homoserine: step 1/1. Transfers an acetyl group from acetyl-CoA to L-homoserine, forming acetyl-L-homoserine. In Thermobifida fusca (strain YX), this protein is Homoserine O-acetyltransferase.